Consider the following 346-residue polypeptide: Holliday junction branch migration complex subunit RuvB (346 aa).

A compositionally biased stretch (polar residues) spans 1 to 11 (MTEQRTIASSA). The disordered stretch occupies residues 1 to 20 (MTEQRTIASSATREDEAADA). Residues 1 to 183 (MTEQRTIASS…FGIVQRLEFY (183 aa)) are large ATPase domain (RuvB-L). ATP-binding positions include Ile22, Arg23, Gly64, Lys67, Thr68, Thr69, 130–132 (EDF), Arg173, Tyr183, and Arg220. Thr68 is a binding site for Mg(2+). The interval 184-254 (SPQELTRIVI…VAQAAMQMLK (71 aa)) is small ATPAse domain (RuvB-S). The interval 257-346 (PEGFDELDRR…PAIGEPGDLF (90 aa)) is head domain (RuvB-H). Residues Arg293, Arg312, and Arg317 each coordinate DNA.

Belongs to the RuvB family. In terms of assembly, homohexamer. Forms an RuvA(8)-RuvB(12)-Holliday junction (HJ) complex. HJ DNA is sandwiched between 2 RuvA tetramers; dsDNA enters through RuvA and exits via RuvB. An RuvB hexamer assembles on each DNA strand where it exits the tetramer. Each RuvB hexamer is contacted by two RuvA subunits (via domain III) on 2 adjacent RuvB subunits; this complex drives branch migration. In the full resolvosome a probable DNA-RuvA(4)-RuvB(12)-RuvC(2) complex forms which resolves the HJ.

The protein resides in the cytoplasm. It catalyses the reaction ATP + H2O = ADP + phosphate + H(+). In terms of biological role, the RuvA-RuvB-RuvC complex processes Holliday junction (HJ) DNA during genetic recombination and DNA repair, while the RuvA-RuvB complex plays an important role in the rescue of blocked DNA replication forks via replication fork reversal (RFR). RuvA specifically binds to HJ cruciform DNA, conferring on it an open structure. The RuvB hexamer acts as an ATP-dependent pump, pulling dsDNA into and through the RuvAB complex. RuvB forms 2 homohexamers on either side of HJ DNA bound by 1 or 2 RuvA tetramers; 4 subunits per hexamer contact DNA at a time. Coordinated motions by a converter formed by DNA-disengaged RuvB subunits stimulates ATP hydrolysis and nucleotide exchange. Immobilization of the converter enables RuvB to convert the ATP-contained energy into a lever motion, pulling 2 nucleotides of DNA out of the RuvA tetramer per ATP hydrolyzed, thus driving DNA branch migration. The RuvB motors rotate together with the DNA substrate, which together with the progressing nucleotide cycle form the mechanistic basis for DNA recombination by continuous HJ branch migration. Branch migration allows RuvC to scan DNA until it finds its consensus sequence, where it cleaves and resolves cruciform DNA. This chain is Holliday junction branch migration complex subunit RuvB, found in Xanthomonas campestris pv. campestris (strain ATCC 33913 / DSM 3586 / NCPPB 528 / LMG 568 / P 25).